The sequence spans 126 residues: Allergen Tha p 1 (126 aa).

Residues 1 to 18 (MKLLILALTCAAAVWARP) form the signal peptide.

This sequence belongs to the insect A10/OS-D protein family.

The protein resides in the secreted. The protein is Allergen Tha p 1 of Thaumetopoea pityocampa (Pine processionary moth).